Here is a 155-residue protein sequence, read N- to C-terminus: MPSIDEVDEIILRELSKNGRATLTELSRKVGLTPAAIKNRVEKLEKLGVIKGYSAIIDHSFLGEFLTALIEIELADPESDELSKLIRPILKLENIKDVYKKTGEFQLTIRATFRDVDSLNEFLKKIRRDYLKNMARRIKVSIILENFKEGGVTLL.

An HTH asnC-type domain is found at 4–65; sequence IDEVDEIILR…IIDHSFLGEF (62 aa). The segment at residues 23–42 is a DNA-binding region (H-T-H motif); the sequence is LTELSRKVGLTPAAIKNRVE.

This is an uncharacterized protein from Pyrococcus furiosus (strain ATCC 43587 / DSM 3638 / JCM 8422 / Vc1).